We begin with the raw amino-acid sequence, 145 residues long: Basic phospholipase A2 S2-22 (145 aa).

The first 19 residues, 1–19 (MYPAHLLVLLAVCVSLLGA), serve as a signal peptide directing secretion. A propeptide spanning residues 20 to 27 (SDIPPQPL) is cleaved from the precursor. 7 disulfide bridges follow: Cys38–Cys99, Cys54–Cys144, Cys56–Cys72, Cys71–Cys127, Cys78–Cys120, Cys88–Cys113, and Cys106–Cys118. 3 residues coordinate Ca(2+): Tyr55, Gly57, and Gly59. Residue His75 is part of the active site. Asp76 lines the Ca(2+) pocket. Residue Asp121 is part of the active site.

The protein belongs to the phospholipase A2 family. Group I subfamily. D49 sub-subfamily. Requires Ca(2+) as cofactor. In terms of tissue distribution, expressed by the venom gland.

Its subcellular location is the secreted. The enzyme catalyses a 1,2-diacyl-sn-glycero-3-phosphocholine + H2O = a 1-acyl-sn-glycero-3-phosphocholine + a fatty acid + H(+). Its function is as follows. Snake venom phospholipase A2 (PLA2) that inhibits collagen-induced platelet aggregation. PLA2 catalyzes the calcium-dependent hydrolysis of the 2-acyl groups in 3-sn-phosphoglycerides. This Austrelaps superbus (Lowland copperhead snake) protein is Basic phospholipase A2 S2-22.